A 202-amino-acid chain; its full sequence is Peptidyl-tRNA hydrolase (202 aa).

Y17 is a binding site for tRNA. The active-site Proton acceptor is H22. TRNA contacts are provided by F76, N78, and N124.

The protein belongs to the PTH family. In terms of assembly, monomer.

The protein resides in the cytoplasm. The enzyme catalyses an N-acyl-L-alpha-aminoacyl-tRNA + H2O = an N-acyl-L-amino acid + a tRNA + H(+). Hydrolyzes ribosome-free peptidyl-tRNAs (with 1 or more amino acids incorporated), which drop off the ribosome during protein synthesis, or as a result of ribosome stalling. Its function is as follows. Catalyzes the release of premature peptidyl moieties from peptidyl-tRNA molecules trapped in stalled 50S ribosomal subunits, and thus maintains levels of free tRNAs and 50S ribosomes. The polypeptide is Peptidyl-tRNA hydrolase (Nitratidesulfovibrio vulgaris (strain DSM 19637 / Miyazaki F) (Desulfovibrio vulgaris)).